The following is a 284-amino-acid chain: tRNA-cytidine(32) 2-sulfurtransferase (284 aa).

Residues 1–11 (MTFHQPVSETA) are compositionally biased toward polar residues. The tract at residues 1–20 (MTFHQPVSETAQPDEASGHP) is disordered. The PP-loop motif signature appears at 63 to 68 (SGGKDS). The [4Fe-4S] cluster site is built by cysteine 138, cysteine 141, and cysteine 229.

Belongs to the TtcA family. Homodimer. The cofactor is Mg(2+). It depends on [4Fe-4S] cluster as a cofactor.

It is found in the cytoplasm. The enzyme catalyses cytidine(32) in tRNA + S-sulfanyl-L-cysteinyl-[cysteine desulfurase] + AH2 + ATP = 2-thiocytidine(32) in tRNA + L-cysteinyl-[cysteine desulfurase] + A + AMP + diphosphate + H(+). Its pathway is tRNA modification. Catalyzes the ATP-dependent 2-thiolation of cytidine in position 32 of tRNA, to form 2-thiocytidine (s(2)C32). The sulfur atoms are provided by the cysteine/cysteine desulfurase (IscS) system. This is tRNA-cytidine(32) 2-sulfurtransferase from Chelativorans sp. (strain BNC1).